A 253-amino-acid polypeptide reads, in one-letter code: Probable transcriptional regulatory protein Tpet_0454 (253 aa).

It belongs to the TACO1 family.

The protein resides in the cytoplasm. This Thermotoga petrophila (strain ATCC BAA-488 / DSM 13995 / JCM 10881 / RKU-1) protein is Probable transcriptional regulatory protein Tpet_0454.